The following is a 191-amino-acid chain: Protein GrpE (191 aa).

The protein belongs to the GrpE family. As to quaternary structure, homodimer.

The protein localises to the cytoplasm. In terms of biological role, participates actively in the response to hyperosmotic and heat shock by preventing the aggregation of stress-denatured proteins, in association with DnaK and GrpE. It is the nucleotide exchange factor for DnaK and may function as a thermosensor. Unfolded proteins bind initially to DnaJ; upon interaction with the DnaJ-bound protein, DnaK hydrolyzes its bound ATP, resulting in the formation of a stable complex. GrpE releases ADP from DnaK; ATP binding to DnaK triggers the release of the substrate protein, thus completing the reaction cycle. Several rounds of ATP-dependent interactions between DnaJ, DnaK and GrpE are required for fully efficient folding. The sequence is that of Protein GrpE from Listeria welshimeri serovar 6b (strain ATCC 35897 / DSM 20650 / CCUG 15529 / CIP 8149 / NCTC 11857 / SLCC 5334 / V8).